A 201-amino-acid chain; its full sequence is Peptidyl-tRNA hydrolase (201 aa).

Tyr14 contributes to the tRNA binding site. The Proton acceptor role is filled by His19. TRNA is bound by residues Tyr64, Asn66, and Asn112.

Belongs to the PTH family. Monomer.

It localises to the cytoplasm. It catalyses the reaction an N-acyl-L-alpha-aminoacyl-tRNA + H2O = an N-acyl-L-amino acid + a tRNA + H(+). Hydrolyzes ribosome-free peptidyl-tRNAs (with 1 or more amino acids incorporated), which drop off the ribosome during protein synthesis, or as a result of ribosome stalling. Its function is as follows. Catalyzes the release of premature peptidyl moieties from peptidyl-tRNA molecules trapped in stalled 50S ribosomal subunits, and thus maintains levels of free tRNAs and 50S ribosomes. The chain is Peptidyl-tRNA hydrolase from Bradyrhizobium diazoefficiens (strain JCM 10833 / BCRC 13528 / IAM 13628 / NBRC 14792 / USDA 110).